The chain runs to 310 residues: MTDKLPLALFLMGPTASGKTELAIRLRQRYPVEIISVDSALIYKDMNIGTAKPDERELSLAPHRLIDILDPSESYSAADFRRDALQAMDDIVAEGKIPLLVGGTMLYYKALLEGLSPLPAANPEIRQQIEQEALTKGWSVLHDELKEIDPVSAARIHPNDPQRLSRALEVFRISGKTLTELTQTKGDSLPYRVKQFAIAPKDRAELHRRIELRFDKMMEAGFEEEMKALYARKDLHPDLPSIRCVGYRQMWEYLDGDCTRDEAVFRGICATRQLAKRQITWLRSWNDLTWLDSDNIEQALETMSEAIASD.

Residue 13–20 (GPTASGKT) participates in ATP binding. 15–20 (TASGKT) is a binding site for substrate. Interaction with substrate tRNA regions lie at residues 38-41 (DSAL), 162-166 (QRLSR), 243-248 (RCVGYR), and 276-283 (KRQITWLR).

This sequence belongs to the IPP transferase family. As to quaternary structure, monomer. It depends on Mg(2+) as a cofactor.

The catalysed reaction is adenosine(37) in tRNA + dimethylallyl diphosphate = N(6)-dimethylallyladenosine(37) in tRNA + diphosphate. Its function is as follows. Catalyzes the transfer of a dimethylallyl group onto the adenine at position 37 in tRNAs that read codons beginning with uridine, leading to the formation of N6-(dimethylallyl)adenosine (i(6)A). This Vibrio campbellii (strain ATCC BAA-1116) protein is tRNA dimethylallyltransferase.